A 521-amino-acid chain; its full sequence is MRPKNYSQMEKPISITTGKFRTNNNNNHNNVWFVVPLFFILCFVLLCFDYSALFTDTDETAFSIPDVTQKSTSSEFTKDDNFSRFPDDPSPDSSCSGRYIYVHELPYRFNGDLLDNCFKITRGTEKDICPYIENYGFGPVIKNYENVLLKQSWFTTNQFMLEVIFHNKMINYRCLTNDSSLASAVFVPFYAGLDMSRYLWGFNITVRDSSSHELMDWLVVQKEWGRMSGRDHFLVSGRIAWDFRRQTDNESDWGSKLRFLPESRNMSMLSIESSSWKNDYAIPYPTCFHPRSVDEIVEWQELMRSRKREYLFTFAGAPRPEYKDSVRGKIIDECLESKKQCYLLDCNYGNVNCDNPVNVMKVFRNSVFCLQPPGDSYTRRSMFDSILAGCIPVFFHPGTAYAQYKWHLPKNHSSYSVYLPVKDVKEWNIKIKERLIEIPEERVVRLREEVIRLIPKVVYADPKYGSDGSEDAFELAVKGMLERIEEVREMMRQGKDGSDGFDDRDDYKYTFSPYEEPQVLA.

At 1-30 (MRPKNYSQMEKPISITTGKFRTNNNNNHNN) the chain is on the cytoplasmic side. The helical; Signal-anchor for type II membrane protein transmembrane segment at 31–51 (VWFVVPLFFILCFVLLCFDYS) threads the bilayer. Residues 52 to 521 (ALFTDTDETA…SPYEEPQVLA (470 aa)) are Lumenal-facing. The segment at 72-92 (TSSEFTKDDNFSRFPDDPSPD) is disordered. Residues 76 to 87 (FTKDDNFSRFPD) show a composition bias toward basic and acidic residues. Residues Asn-81, Asn-177, Asn-203, Asn-249, Asn-265, and Asn-411 are each glycosylated (N-linked (GlcNAc...) asparagine). The tract at residues 492–521 (RQGKDGSDGFDDRDDYKYTFSPYEEPQVLA) is disordered.

This sequence belongs to the glycosyltransferase 47 family. As to expression, expressed in roots, hypocotyls, cotyledons, leaves, stems, stamens and carpels.

It localises to the golgi apparatus membrane. Functions in xyloglucan synthesis by adding side chains to the xylosylated glucan backbone. Involved in the galactosylation of hemicellulose xyloglucan. The chain is Probable xyloglucan galactosyltransferase GT14 from Arabidopsis thaliana (Mouse-ear cress).